A 757-amino-acid polypeptide reads, in one-letter code: 5-methyltetrahydropteroyltriglutamate--homocysteine methyltransferase (757 aa).

5-methyltetrahydropteroyltri-L-glutamate contacts are provided by residues 15–18 (RELK) and K114. Residues 428 to 430 (IGS) and E481 each bind L-homocysteine. Residues 428–430 (IGS) and E481 each bind L-methionine. 5-methyltetrahydropteroyltri-L-glutamate is bound by residues 512-513 (RC) and W558. An L-homocysteine-binding site is contributed by D596. Residue D596 coordinates L-methionine. E602 lines the 5-methyltetrahydropteroyltri-L-glutamate pocket. Positions 639, 641, and 663 each coordinate Zn(2+). The Proton donor role is filled by H692. Residue C724 coordinates Zn(2+).

Belongs to the vitamin-B12 independent methionine synthase family. Zn(2+) is required as a cofactor.

It carries out the reaction 5-methyltetrahydropteroyltri-L-glutamate + L-homocysteine = tetrahydropteroyltri-L-glutamate + L-methionine. Its pathway is amino-acid biosynthesis; L-methionine biosynthesis via de novo pathway; L-methionine from L-homocysteine (MetE route): step 1/1. In terms of biological role, catalyzes the transfer of a methyl group from 5-methyltetrahydrofolate to homocysteine resulting in methionine formation. This Lactococcus lactis subsp. cremoris (strain SK11) protein is 5-methyltetrahydropteroyltriglutamate--homocysteine methyltransferase.